A 353-amino-acid chain; its full sequence is Photosystem II protein D1 (353 aa).

Threonine 2 carries the post-translational modification N-acetylthreonine. A Phosphothreonine modification is found at threonine 2. 3 helical membrane-spanning segments follow: residues 29-46 (YIGW…TATS), 118-133 (HFLL…EWEL), and 142-156 (WIAV…AATA). Histidine 118 provides a ligand contact to chlorophyll a. Tyrosine 126 provides a ligand contact to pheophytin a. Positions 170 and 189 each coordinate [CaMn4O5] cluster. A helical membrane pass occupies residues 197–218 (FHMLGVAGVFGGSLFSAMHGSL). Residue histidine 198 participates in chlorophyll a binding. A quinone contacts are provided by residues histidine 215 and 264-265 (SF). Histidine 215 contributes to the Fe cation binding site. Position 272 (histidine 272) interacts with Fe cation. A helical membrane pass occupies residues 274-288 (FLAAWPVVGIWFTAL). Residues histidine 332, glutamate 333, aspartate 342, and alanine 344 each contribute to the [CaMn4O5] cluster site. Positions 345–353 (SVEAPSTNG) are excised as a propeptide.

This sequence belongs to the reaction center PufL/M/PsbA/D family. PSII is composed of 1 copy each of membrane proteins PsbA, PsbB, PsbC, PsbD, PsbE, PsbF, PsbH, PsbI, PsbJ, PsbK, PsbL, PsbM, PsbT, PsbX, PsbY, PsbZ, Psb30/Ycf12, at least 3 peripheral proteins of the oxygen-evolving complex and a large number of cofactors. It forms dimeric complexes. It depends on The D1/D2 heterodimer binds P680, chlorophylls that are the primary electron donor of PSII, and subsequent electron acceptors. It shares a non-heme iron and each subunit binds pheophytin, quinone, additional chlorophylls, carotenoids and lipids. D1 provides most of the ligands for the Mn4-Ca-O5 cluster of the oxygen-evolving complex (OEC). There is also a Cl(-1) ion associated with D1 and D2, which is required for oxygen evolution. The PSII complex binds additional chlorophylls, carotenoids and specific lipids. as a cofactor. In terms of processing, tyr-161 forms a radical intermediate that is referred to as redox-active TyrZ, YZ or Y-Z. Post-translationally, C-terminally processed by CTPA; processing is essential to allow assembly of the oxygen-evolving complex and thus photosynthetic growth.

It localises to the plastid. The protein localises to the chloroplast thylakoid membrane. It carries out the reaction 2 a plastoquinone + 4 hnu + 2 H2O = 2 a plastoquinol + O2. Functionally, photosystem II (PSII) is a light-driven water:plastoquinone oxidoreductase that uses light energy to abstract electrons from H(2)O, generating O(2) and a proton gradient subsequently used for ATP formation. It consists of a core antenna complex that captures photons, and an electron transfer chain that converts photonic excitation into a charge separation. The D1/D2 (PsbA/PsbD) reaction center heterodimer binds P680, the primary electron donor of PSII as well as several subsequent electron acceptors. The protein is Photosystem II protein D1 of Acorus calamus (Sweet flag).